Reading from the N-terminus, the 142-residue chain is Small ribosomal subunit protein uS12 (142 aa).

Belongs to the universal ribosomal protein uS12 family. In terms of assembly, part of the 30S ribosomal subunit.

With S4 and S5 plays an important role in translational accuracy. Located at the interface of the 30S and 50S subunits. This is Small ribosomal subunit protein uS12 from Methanoregula boonei (strain DSM 21154 / JCM 14090 / 6A8).